The chain runs to 304 residues: Secreted mono- and diacylglycerol lipase MDL2 (304 aa).

Residues 1–19 form the signal peptide; it reads MILGRTISLFLGCSALVSG. Cys55 and Cys297 are joined by a disulfide. 2 N-linked (GlcNAc...) asparagine glycosylation sites follow: Asn102 and Asn161. The Nucleophile role is filled by Ser171. Asp228 is an active-site residue. An N-linked (GlcNAc...) asparagine glycan is attached at Asn253. His281 is an active-site residue.

It belongs to the AB hydrolase superfamily. Lipase family. Class 3 subfamily.

It is found in the secreted. Its subcellular location is the cell wall. The enzyme catalyses a monoacylglycerol + H2O = glycerol + a fatty acid + H(+). The catalysed reaction is a diacylglycerol + H2O = a monoacylglycerol + a fatty acid + H(+). In terms of biological role, secreted lipase involved in Dandruff and seborrheic dermatitis (D/SD) probably via lipase-mediated breakdown of sebaceous lipids and release of irritating free fatty acids. Shows activity against monoglyceride and diglyceride substrates, but not triglyceride substrates and does not exhibit regio-selective production of diacylglycerols. Hydrolyzes both 1,2- and 1,3-diacylglycerols. Also hydrolyzes distearin, dilinolein and dipalmitolein. Cleaves oleic acid from 1,2 isomers of diolein on both the 1 and the 2 position of the glycerol backbone, resulting mainly in free fatty acids but no monoolein is detected. Shows activity on monoolein and liberates mostly free fatty acids, but can also perform the reverse reaction and produce diolein. The sequence is that of Secreted mono- and diacylglycerol lipase MDL2 from Malassezia globosa (strain ATCC MYA-4612 / CBS 7966) (Dandruff-associated fungus).